The sequence spans 360 residues: Probable cinnamyl alcohol dehydrogenase 6 (360 aa).

Cysteine 48 lines the Zn(2+) pocket. Residue threonine 50 participates in NADP(+) binding. Residues histidine 70, glutamate 71, cysteine 101, cysteine 104, cysteine 107, cysteine 115, and cysteine 164 each coordinate Zn(2+). NADP(+) contacts are provided by residues threonine 168, 192-197, 215-220, threonine 255, glycine 279, and 302-304; these read GLGGLG, STSPAK, and SMT.

The protein belongs to the zinc-containing alcohol dehydrogenase family. In terms of assembly, homodimer. It depends on Zn(2+) as a cofactor.

It carries out the reaction (E)-cinnamyl alcohol + NADP(+) = (E)-cinnamaldehyde + NADPH + H(+). The enzyme catalyses (E)-coniferol + NADP(+) = (E)-coniferaldehyde + NADPH + H(+). It catalyses the reaction (E)-sinapyl alcohol + NADP(+) = (E)-sinapaldehyde + NADPH + H(+). The catalysed reaction is (E)-4-coumaroyl alcohol + NADP(+) = (E)-4-coumaraldehyde + NADPH + H(+). It carries out the reaction (E)-caffeyl alcohol + NADP(+) = (E)-caffeyl aldehyde + NADPH + H(+). It participates in aromatic compound metabolism; phenylpropanoid biosynthesis. In terms of biological role, involved in lignin biosynthesis. Catalyzes the final step specific for the production of lignin monomers. Catalyzes the NADPH-dependent reduction of coniferaldehyde, 5-hydroxyconiferaldehyde, sinapaldehyde, 4-coumaraldehyde and caffeyl aldehyde to their respective alcohols. This Oryza sativa subsp. japonica (Rice) protein is Probable cinnamyl alcohol dehydrogenase 6.